Consider the following 438-residue polypeptide: UDP-N-acetylmuramoylalanine--D-glutamate ligase (438 aa).

105–111 contacts ATP; sequence GSNGKTT.

It belongs to the MurCDEF family.

The protein resides in the cytoplasm. The enzyme catalyses UDP-N-acetyl-alpha-D-muramoyl-L-alanine + D-glutamate + ATP = UDP-N-acetyl-alpha-D-muramoyl-L-alanyl-D-glutamate + ADP + phosphate + H(+). It functions in the pathway cell wall biogenesis; peptidoglycan biosynthesis. Cell wall formation. Catalyzes the addition of glutamate to the nucleotide precursor UDP-N-acetylmuramoyl-L-alanine (UMA). The polypeptide is UDP-N-acetylmuramoylalanine--D-glutamate ligase (Oenococcus oeni (strain ATCC BAA-331 / PSU-1)).